Consider the following 360-residue polypeptide: MSIHVKLHLGYQDFALDLDLQLPGRGVTALYGHSGSGKTTCLRCIAGLEKAGRGRIQINDEVWQDSQRKLFVPPHKRSLGYVFQEASLFAHLSVQANLEFGLRRIAKAQRRVDMAQATELLGIGHLLQRHPQHLSGGERQRIGIARALLTSPRLLLMDEPLAALDSKRKSEILPYLERLHDELDIPVLYVSHSQDEVARLADHIVLLSDGRALASGPVGETLARLDLPLALGDDAGVVVEGRVSHYDPDYQLLTLQLPGSQLTIRVAHEPLALGKALRFKVQARDVSLSLQDSEHSSILNRLPVTVRDEIPADNAAHVLVRLDVAGSPLLARITRFSRDQLSLHPGQQLWAQIKAVAVLA.

In terms of domain architecture, ABC transporter spans 5-234; the sequence is VKLHLGYQDF…LDLPLALGDD (230 aa). 32–39 contacts ATP; it reads GHSGSGKT. The region spanning 295 to 360 is the Mop domain; that stretch reads HSSILNRLPV…AQIKAVAVLA (66 aa).

The protein belongs to the ABC transporter superfamily. Molybdate importer (TC 3.A.1.8) family. In terms of assembly, the complex is composed of two ATP-binding proteins (ModC), two transmembrane proteins (ModB) and a solute-binding protein (ModA).

It is found in the cell inner membrane. The catalysed reaction is molybdate(out) + ATP + H2O = molybdate(in) + ADP + phosphate + H(+). Functionally, part of the ABC transporter complex ModABC involved in molybdenum import. Responsible for energy coupling to the transport system. The sequence is that of Molybdenum import ATP-binding protein ModC from Pseudomonas fluorescens (strain ATCC BAA-477 / NRRL B-23932 / Pf-5).